Consider the following 571-residue polypeptide: Kinesin light chain (571 aa).

A coiled-coil region spans residues 54-160; sequence LLTSMKTIRK…KKHLEFMNEM (107 aa). The span at 167 to 177 shows a compositional bias: basic and acidic residues; it reads EAQVNEEKESE. Positions 167–210 are disordered; it reads EAQVNEEKESEQSSLDLGFPDDDDDGGQPEVLSPTQPSAMAQAA. TPR repeat units follow at residues 220–253, 262–295, 304–337, 346–379, 388–421, and 471–504; these read LRTLHNLVIQYASQGRYEVAVPLCKQALEDLEKT, ATMLNILALVYRDQGKYKEAANLLNDALGIREKT, AATLNNLAVLYGKRGKYKDAEPLCKRALVIREKV, AKQLNNLALLCQNQGKYEEVERYYQRALEIYQKE, AKTKNNLASAYLKQGKYKQAEILYKEVLTRAHEK, and TTTLKNLGALYRRQGKYEAAETLEECALRSRKSA. The tract at residues 518-571 is disordered; the sequence is GSDFSKGQSPKDRKRSNSRDRNRRDSMDSVSYEKSGDGDEHEKSKLHVGTSHKQ. 2 stretches are compositionally biased toward basic and acidic residues: residues 526-544 and 551-562; these read SPKDRKRSNSRDRNRRDSM and KSGDGDEHEKSK.

The protein belongs to the kinesin light chain family. Oligomeric complex composed of two heavy chains and two light chains.

The protein resides in the cytoplasm. It localises to the cytoskeleton. Its function is as follows. Kinesin is a microtubule-associated force-producing protein that may play a role in organelle transport. The light chain may function in coupling of cargo to the heavy chain or in the modulation of its ATPase activity. The polypeptide is Kinesin light chain (Doryteuthis pealeii (Longfin inshore squid)).